A 505-amino-acid polypeptide reads, in one-letter code: Alpha-ketoglutarate-dependent dioxygenase FTO (505 aa).

The residue at position 4 (T4) is a Phosphothreonine. Residues 32–327 (TPKDDEFYQQ…SSTHRVAECS (296 aa)) are fe2OG dioxygenase domain. The substrate site is built by R96 and Y108. N205 serves as a coordination point for 2-oxoglutarate. The loop L1; predicted to block binding of double-stranded DNA or RNA stretch occupies residues 213-224 (PYLKEEPYFGMG). An N6-acetyllysine modification is found at K216. 2 residues coordinate Fe cation: H231 and D233. 231-234 (HHDE) serves as a coordination point for substrate. A 2-oxoglutarate-binding site is contributed by Y295. H307 is a binding site for Fe cation. Residues 316-318 (RFS), T320, and R322 contribute to the 2-oxoglutarate site.

Belongs to the fto family. Monomer. May also exist as homodimer. The cofactor is Fe(2+).

The protein localises to the nucleus. It localises to the nucleus speckle. It is found in the cytoplasm. It catalyses the reaction a 5'-end (N(7)-methyl 5'-triphosphoguanosine)-(N(6),2'-O-dimethyladenosine) in mRNA + 2-oxoglutarate + O2 = a 5'-end (N(7)-methyl 5'-triphosphoguanosine)-(2'-O-methyladenosine) in mRNA + formaldehyde + succinate + CO2. It carries out the reaction an N(6)-methyladenosine in mRNA + 2-oxoglutarate + O2 = an adenosine in mRNA + formaldehyde + succinate + CO2. The catalysed reaction is N(6)-methyladenosine in U6 snRNA + 2-oxoglutarate + O2 = adenosine in U6 snRNA + formaldehyde + succinate + CO2. The enzyme catalyses a 5'-end (N(7)-methyl 5'-triphosphoguanosine)-(N(6),2'-O-dimethyladenosine) in U6 snRNA + 2-oxoglutarate + O2 = a 5'-end (N(7)-methyl 5'-triphosphoguanosine)-(2'-O-methyladenosine) in U6 snRNA + formaldehyde + succinate + CO2. It catalyses the reaction an N(1)-methyladenosine in tRNA + 2-oxoglutarate + O2 = an adenosine in tRNA + formaldehyde + succinate + CO2. With respect to regulation, activated by ascorbate. Inhibited by N-oxalylglycine, fumarate and succinate. RNA demethylase that mediates oxidative demethylation of different RNA species, such as mRNAs, tRNAs and snRNAs, and acts as a regulator of fat mass, adipogenesis and energy homeostasis. Specifically demethylates N(6)-methyladenosine (m6A) RNA, the most prevalent internal modification of messenger RNA (mRNA) in higher eukaryotes. M6A demethylation by FTO affects mRNA expression and stability. Also able to demethylate m6A in U6 small nuclear RNA (snRNA). Mediates demethylation of N(6),2'-O-dimethyladenosine cap (m6A(m)), by demethylating the N(6)-methyladenosine at the second transcribed position of mRNAs and U6 snRNA. Demethylation of m6A(m) in the 5'-cap by FTO affects mRNA stability by promoting susceptibility to decapping. Also acts as a tRNA demethylase by removing N(1)-methyladenine from various tRNAs. Has no activity towards 1-methylguanine. Has no detectable activity towards double-stranded DNA. Also able to repair alkylated DNA and RNA by oxidative demethylation: demethylates single-stranded RNA containing 3-methyluracil, single-stranded DNA containing 3-methylthymine and has low demethylase activity towards single-stranded DNA containing 1-methyladenine or 3-methylcytosine. Ability to repair alkylated DNA and RNA is however unsure in vivo. Involved in the regulation of fat mass, adipogenesis and body weight, thereby contributing to the regulation of body size and body fat accumulation. Involved in the regulation of thermogenesis and the control of adipocyte differentiation into brown or white fat cells. Regulates activity of the dopaminergic midbrain circuitry via its ability to demethylate m6A in mRNAs. In Pongo abelii (Sumatran orangutan), this protein is Alpha-ketoglutarate-dependent dioxygenase FTO.